The chain runs to 530 residues: Na(+)/H(+) antiporter NhaB (530 aa).

12 helical membrane passes run 13-33, 98-118, 123-145, 149-166, 205-225, 238-258, 308-328, 330-350, 356-376, 393-413, 451-471, and 480-500; these read FLGK…IINP, LLLV…LFIF, LGIQ…LSAF, LTVI…YSIY, LLMH…VGEP, FGEF…CGIL, IAVW…LIGL, VIIL…GKAF, FTAL…QALF, LALF…VFVG, ATPN…APLI, and IMAL…IVFF.

Belongs to the NhaB Na(+)/H(+) (TC 2.A.34) antiporter family.

Its subcellular location is the cell inner membrane. It carries out the reaction 2 Na(+)(in) + 3 H(+)(out) = 2 Na(+)(out) + 3 H(+)(in). In terms of biological role, na(+)/H(+) antiporter that extrudes sodium in exchange for external protons. The chain is Na(+)/H(+) antiporter NhaB from Vibrio atlanticus (strain LGP32) (Vibrio splendidus (strain Mel32)).